Here is a 375-residue protein sequence, read N- to C-terminus: AT-rich binding protein (375 aa).

The C2H2-type 1 zinc finger occupies Ile-29–His-52. A compositionally biased stretch (basic and acidic residues) spans Asp-110 to Glu-119. Positions Asp-110–Gln-142 are disordered. Positions Gln-121–Gln-142 are enriched in low complexity. C2H2-type zinc fingers lie at residues Tyr-308–His-332 and Phe-338–His-361.

The protein resides in the nucleus. In terms of biological role, may be a transcription factor for genes having (A+T) stretches in their promoter and/or enhancer regions. Binds to AT rich DNA. The polypeptide is AT-rich binding protein (Drosophila pseudoobscura pseudoobscura (Fruit fly)).